The chain runs to 623 residues: Chaperone protein DnaK (623 aa).

T175 carries the phosphothreonine; by autocatalysis modification. The segment at 580 to 623 is disordered; that stretch reads PEGAQGAGFDPNNMGGANAGNASAGNDKKDDNVVDADFKVEDDK. Residues 591–604 show a composition bias toward low complexity; the sequence is NNMGGANAGNASAG. Residues 605–623 are compositionally biased toward basic and acidic residues; the sequence is NDKKDDNVVDADFKVEDDK.

This sequence belongs to the heat shock protein 70 family.

Functionally, acts as a chaperone. This is Chaperone protein DnaK from Clostridium botulinum (strain Hall / ATCC 3502 / NCTC 13319 / Type A).